A 779-amino-acid chain; its full sequence is Lon protease (779 aa).

Residues 10 to 203 (LPLLPLRGLL…ILLTILNNER (194 aa)) enclose the Lon N-terminal domain. Position 355–362 (355–362 (GPPGVGKT)) interacts with ATP. The region spanning 591–772 (KDQVGSVTGL…DEVLRHALTK (182 aa)) is the Lon proteolytic domain. Catalysis depends on residues Ser-678 and Lys-721.

It belongs to the peptidase S16 family. Homohexamer. Organized in a ring with a central cavity.

It localises to the cytoplasm. The catalysed reaction is Hydrolysis of proteins in presence of ATP.. ATP-dependent serine protease that mediates the selective degradation of mutant and abnormal proteins as well as certain short-lived regulatory proteins. Required for cellular homeostasis and for survival from DNA damage and developmental changes induced by stress. Degrades polypeptides processively to yield small peptide fragments that are 5 to 10 amino acids long. Binds to DNA in a double-stranded, site-specific manner. This is Lon protease from Brevibacillus choshinensis.